A 109-amino-acid polypeptide reads, in one-letter code: Nucleoid-associated protein A1S_1684 (109 aa).

This sequence belongs to the YbaB/EbfC family. Homodimer.

Its subcellular location is the cytoplasm. It localises to the nucleoid. In terms of biological role, binds to DNA and alters its conformation. May be involved in regulation of gene expression, nucleoid organization and DNA protection. This Acinetobacter baumannii (strain ATCC 17978 / DSM 105126 / CIP 53.77 / LMG 1025 / NCDC KC755 / 5377) protein is Nucleoid-associated protein A1S_1684.